We begin with the raw amino-acid sequence, 224 residues long: LRP chaperone MESD (224 aa).

Positions methionine 1–alanine 29 are cleaved as a signal peptide. The segment at methionine 1 to glycine 155 is chaperone domain. 2 disordered regions span residues tyrosine 28–tyrosine 49 and glycine 178–leucine 224. The interval serine 156–lysine 195 is escort domain. A compositionally biased stretch (basic and acidic residues) spans glycine 187–leucine 224. Residue asparagine 192 is glycosylated (N-linked (GlcNAc...) asparagine). A Prevents secretion from ER motif is present at residues arginine 221–leucine 224.

Belongs to the MESD family. Monomer. Interacts with LRP5; the interaction prevents LRP5 from forming aggregates and chaperones LRP6 to the plasma membrane. Interacts with LRP6; the interaction prevents LRP6 from forming aggregates and chaperones LRP6 to the plasma membrane. Interacts with LRP4; the interaction promotes glycosylation of LRP4 and its cell-surface expression. As to expression, expressed in many tissues, but not in skeletal muscles. In the retina expressed in retinal ganglion cells, inner and outer plexiform layers, photoreceptor inner and outer segments and retinal pigment epithelium (at protein level).

It is found in the endoplasmic reticulum. In terms of biological role, chaperone specifically assisting the folding of beta-propeller/EGF modules within the family of low-density lipoprotein receptors (LDLRs). Acts as a modulator of the Wnt pathway through chaperoning the coreceptors of the canonical Wnt pathway, LRP5 and LRP6, to the plasma membrane. Essential for specification of embryonic polarity and mesoderm induction. Plays an essential role in neuromuscular junction (NMJ) formation by promoting cell-surface expression of LRP4. May regulate phagocytosis of apoptotic retinal pigment epithelium (RPE) cells. In Mus musculus (Mouse), this protein is LRP chaperone MESD.